Consider the following 699-residue polypeptide: tRNA 5-methylaminomethyl-2-thiouridine biosynthesis bifunctional protein MnmC (699 aa).

Residues 1 to 260 (MTAKPHISCQ…ERKLLRQQAN (260 aa)) are tRNA (mnm(5)s(2)U34)-methyltransferase. The tract at residues 282-699 (IGGGLASAHL…LRKLLKGKAL (418 aa)) is FAD-dependent cmnm(5)s(2)U34 oxidoreductase.

This sequence in the N-terminal section; belongs to the methyltransferase superfamily. tRNA (mnm(5)s(2)U34)-methyltransferase family. In the C-terminal section; belongs to the DAO family. The cofactor is FAD.

It localises to the cytoplasm. It catalyses the reaction 5-aminomethyl-2-thiouridine(34) in tRNA + S-adenosyl-L-methionine = 5-methylaminomethyl-2-thiouridine(34) in tRNA + S-adenosyl-L-homocysteine + H(+). Functionally, catalyzes the last two steps in the biosynthesis of 5-methylaminomethyl-2-thiouridine (mnm(5)s(2)U) at the wobble position (U34) in tRNA. Catalyzes the FAD-dependent demodification of cmnm(5)s(2)U34 to nm(5)s(2)U34, followed by the transfer of a methyl group from S-adenosyl-L-methionine to nm(5)s(2)U34, to form mnm(5)s(2)U34. The polypeptide is tRNA 5-methylaminomethyl-2-thiouridine biosynthesis bifunctional protein MnmC (Shewanella oneidensis (strain ATCC 700550 / JCM 31522 / CIP 106686 / LMG 19005 / NCIMB 14063 / MR-1)).